We begin with the raw amino-acid sequence, 481 residues long: Protein nucleotidyltransferase YdiU (481 aa).

G85, G87, R88, K108, D120, G121, R172, and R179 together coordinate ATP. D248 serves as the catalytic Proton acceptor. Residues N249 and D258 each contribute to the Mg(2+) site. Position 258 (D258) interacts with ATP.

The protein belongs to the SELO family. Mg(2+) serves as cofactor. It depends on Mn(2+) as a cofactor.

The catalysed reaction is L-seryl-[protein] + ATP = 3-O-(5'-adenylyl)-L-seryl-[protein] + diphosphate. The enzyme catalyses L-threonyl-[protein] + ATP = 3-O-(5'-adenylyl)-L-threonyl-[protein] + diphosphate. It catalyses the reaction L-tyrosyl-[protein] + ATP = O-(5'-adenylyl)-L-tyrosyl-[protein] + diphosphate. It carries out the reaction L-histidyl-[protein] + UTP = N(tele)-(5'-uridylyl)-L-histidyl-[protein] + diphosphate. The catalysed reaction is L-seryl-[protein] + UTP = O-(5'-uridylyl)-L-seryl-[protein] + diphosphate. The enzyme catalyses L-tyrosyl-[protein] + UTP = O-(5'-uridylyl)-L-tyrosyl-[protein] + diphosphate. In terms of biological role, nucleotidyltransferase involved in the post-translational modification of proteins. It can catalyze the addition of adenosine monophosphate (AMP) or uridine monophosphate (UMP) to a protein, resulting in modifications known as AMPylation and UMPylation. In Cereibacter sphaeroides (strain KD131 / KCTC 12085) (Rhodobacter sphaeroides), this protein is Protein nucleotidyltransferase YdiU.